Consider the following 801-residue polypeptide: N,N'-diacetylchitobiose phosphorylase (801 aa).

N-acetyl-alpha-D-glucosamine 1-phosphate contacts are provided by R333, R343, R349, D350, W490, and D492. D492 serves as the catalytic Proton donor. N-acetyl-D-glucosamine-binding residues include D492, K636, and E637. The N-acetyl-alpha-D-glucosamine 1-phosphate site is built by E637, H644, Q690, T709, and G710.

The protein belongs to the glycosyl hydrolase 94 family. In terms of assembly, homodimer.

It carries out the reaction N,N'-diacetylchitobiose + phosphate = N-acetyl-alpha-D-glucosamine 1-phosphate + N-acetyl-D-glucosamine. Catalyzes the reversible phosphorolysis of chitobiose (N,N'-diacetylchitobiose or (GlcNAc)(2)) into N-acetyl-alpha-D-glucosamine 1-phosphate (GlcNAc-1-P) and N-acetyl-D-glucosamine (GlcNAc) with inversion of the anomeric configuration. In the synthetic reaction, is also active on glucose-1-phosphate with 10% activity as compared with that on GlcNAc-1-P. GlcNAc is the best acceptor substrate, but the enzyme can use aryl-beta-glycosides of GlcNAc as the acceptor substrate with 10-20% activities of GlcNAc. Shows no phosphorolytic activity on cellobiose. In Vibrio proteolyticus (Aeromonas proteolytica), this protein is N,N'-diacetylchitobiose phosphorylase.